Here is a 163-residue protein sequence, read N- to C-terminus: 6,7-dimethyl-8-ribityllumazine synthase (163 aa).

5-amino-6-(D-ribitylamino)uracil contacts are provided by residues Phe27, 58–60 (ALE), and 87–89 (CVI). 92-93 (DT) contacts (2S)-2-hydroxy-3-oxobutyl phosphate. His95 (proton donor) is an active-site residue. Residue Asn120 coordinates 5-amino-6-(D-ribitylamino)uracil. Arg134 is a (2S)-2-hydroxy-3-oxobutyl phosphate binding site.

It belongs to the DMRL synthase family.

The catalysed reaction is (2S)-2-hydroxy-3-oxobutyl phosphate + 5-amino-6-(D-ribitylamino)uracil = 6,7-dimethyl-8-(1-D-ribityl)lumazine + phosphate + 2 H2O + H(+). Its pathway is cofactor biosynthesis; riboflavin biosynthesis; riboflavin from 2-hydroxy-3-oxobutyl phosphate and 5-amino-6-(D-ribitylamino)uracil: step 1/2. Catalyzes the formation of 6,7-dimethyl-8-ribityllumazine by condensation of 5-amino-6-(D-ribitylamino)uracil with 3,4-dihydroxy-2-butanone 4-phosphate. This is the penultimate step in the biosynthesis of riboflavin. The sequence is that of 6,7-dimethyl-8-ribityllumazine synthase from Afipia carboxidovorans (strain ATCC 49405 / DSM 1227 / KCTC 32145 / OM5) (Oligotropha carboxidovorans).